The following is a 428-amino-acid chain: Sulfite exporter TauE/SafE family protein 6 (428 aa).

Helical transmembrane passes span 1 to 21 (MKTLFVLFILILCVFAINANQ), 61 to 81 (ALVVAGVLCFTAALISSASGI), 82 to 102 (GDGFFFIPIMNLVAGIDLKAA), 105 to 125 (FSAFMVTGGSIANLINNHFGC), 128 to 148 (LIDYDLALLLEPCMLLGVSVG), 149 to 169 (VICNKVFPEWLITGLFVVFLM), 245 to 265 (YWILLSLQIPLALVFTILALS), 294 to 314 (VMSFLAGLLGGIFGIGGGMII), 332 to 352 (TSFMVFFSATMSGVQYLLLGM), 356 to 376 (EAAYVFSVICFFASTLGLVFA), and 388 to 408 (IIVFLVGTMMYLTTIVMASFG).

The protein belongs to the 4-toluene sulfonate uptake permease (TSUP) (TC 2.A.102) family.

The protein localises to the membrane. This Arabidopsis thaliana (Mouse-ear cress) protein is Sulfite exporter TauE/SafE family protein 6.